Consider the following 89-residue polypeptide: Small ribosomal subunit protein uS15 (89 aa).

Belongs to the universal ribosomal protein uS15 family. In terms of assembly, part of the 30S ribosomal subunit. Forms a bridge to the 50S subunit in the 70S ribosome, contacting the 23S rRNA.

One of the primary rRNA binding proteins, it binds directly to 16S rRNA where it helps nucleate assembly of the platform of the 30S subunit by binding and bridging several RNA helices of the 16S rRNA. Its function is as follows. Forms an intersubunit bridge (bridge B4) with the 23S rRNA of the 50S subunit in the ribosome. This Burkholderia ambifaria (strain MC40-6) protein is Small ribosomal subunit protein uS15.